Consider the following 168-residue polypeptide: S-ribosylhomocysteine lyase (168 aa).

Residues His-54, His-58, and Cys-128 each contribute to the Fe cation site.

This sequence belongs to the LuxS family. As to quaternary structure, homodimer. It depends on Fe cation as a cofactor.

The enzyme catalyses S-(5-deoxy-D-ribos-5-yl)-L-homocysteine = (S)-4,5-dihydroxypentane-2,3-dione + L-homocysteine. Its function is as follows. Involved in the synthesis of autoinducer 2 (AI-2) which is secreted by bacteria and is used to communicate both the cell density and the metabolic potential of the environment. The regulation of gene expression in response to changes in cell density is called quorum sensing. Catalyzes the transformation of S-ribosylhomocysteine (RHC) to homocysteine (HC) and 4,5-dihydroxy-2,3-pentadione (DPD). The chain is S-ribosylhomocysteine lyase from Neisseria gonorrhoeae (strain ATCC 700825 / FA 1090).